The sequence spans 574 residues: Pyruvate kinase PKLR (574 aa).

Phosphoserine is present on residues Ser-2, Ser-19, Ser-26, and Ser-43. Arg-116 contacts substrate. Residues Asn-118, Ser-120, Asp-156, and Thr-157 each coordinate K(+). 118–121 is an ATP binding site; the sequence is NFSH. ATP-binding residues include Arg-163 and Lys-250. Ser-292 carries the phosphoserine modification. Lys-313 contacts substrate. A Mn(2+)-binding site is contributed by Glu-315. Residues Gly-338, Asp-339, and Thr-371 each coordinate substrate. Asp-339 is a binding site for Mn(2+). Residues 475-480, Trp-525, Arg-532, and 559-564 contribute to the beta-D-fructose 1,6-bisphosphate site; these read TKTGRS and RPGSGY.

It belongs to the pyruvate kinase family. As to quaternary structure, homotetramer. It depends on Mg(2+) as a cofactor. Mn(2+) is required as a cofactor. K(+) serves as cofactor.

It catalyses the reaction pyruvate + ATP = phosphoenolpyruvate + ADP + H(+). Its pathway is carbohydrate degradation; glycolysis; pyruvate from D-glyceraldehyde 3-phosphate: step 5/5. With respect to regulation, allosterically activated by fructose 1,6-bisphosphate. Its function is as follows. Pyruvate kinase that catalyzes the conversion of phosphoenolpyruvate to pyruvate with the synthesis of ATP, and which plays a key role in glycolysis. The protein is Pyruvate kinase PKLR (Pklr) of Rattus norvegicus (Rat).